Here is an 810-residue protein sequence, read N- to C-terminus: Glycerol-3-phosphate acyltransferase (810 aa).

Residues 305–310 carry the HXXXXD motif motif; sequence CHRSHI.

The protein belongs to the GPAT/DAPAT family.

It is found in the cell inner membrane. The enzyme catalyses sn-glycerol 3-phosphate + an acyl-CoA = a 1-acyl-sn-glycero-3-phosphate + CoA. It participates in phospholipid metabolism; CDP-diacylglycerol biosynthesis; CDP-diacylglycerol from sn-glycerol 3-phosphate: step 1/3. The chain is Glycerol-3-phosphate acyltransferase from Haemophilus influenzae (strain 86-028NP).